The chain runs to 565 residues: Perivitellin-2 67 kDa subunit (565 aa).

Residues Met1–Gly26 form the signal peptide. The MACPF domain occupies Ala27–Thr340.

In terms of assembly, perivitellin-2 is a heterooctamer of 4 identical 98 kDa heterodimers, each composed of one 31 kDa and one 67 kDa subunits. The 98 kDa heterodimer subunits are held together by disulfide bridges while the heterodimers are assembled into the native perivitellin-2 octamer by non-covalent forces. In terms of processing, glycosylated. Contains four O-linked and one N-linked oligosaccharide bonds. The protein contains 2.5% of carbohydrates (high levels of mannose, galactose, and NAcGlucosamine, and small amounts of NacGalactosamine). PV2 is a very high density lipoprotein (VHDL). It contains 3.75% of lipids. The major lipid classes are free sterols and phospholipids and also have significant quantities of energy-providing triacylglycerides and free fatty acids. In terms of tissue distribution, produced by albumen secretory cells. Found in developing eggs.

The protein resides in the secreted. It localises to the target cell membrane. In terms of biological role, the egg defensive protein perivitellin-2 is a pore-forming two-subunit glycoprotein that affects both the nervous and digestive systems of mammals. In addition, it is a source of both structural and energetic molecules during embryonic development. The tachylectin subunit (31 kDa) binds target membranes while the MACPF subunit (67 kDa) disrupts lipid bilayers forming large pores altering the plasma membrance conductance. Both in vivo and in vitro, the protein shows wide pH range stability and is resistant to enzymatic proteolysis from gastrointestinal environments. It specifically binds mature enterocytes but does not cause cell disruption on caco-2 (human colorectal adenocarcinoma cells) or rat intestinal cells. After oral administration to mice, it binds enterocytes and induces large dose-dependent morphological changes on their small intestine mucosa, reducing the absorptive surface. Additionally, it is detected in the Peyer's patches where it activates lymphoid follicles and triggers apoptosis. The toxin can also traverse the intestinal barrier and induce oral adaptive immunity with evidence of circulating antibody response. The toxin also shows hemagglutination properties thanks to the tachylectin subunit, but does not show hemolytic activity. In addition to enterotoxin activity, the toxin also acts as a neurotoxin, since an intraperitoneal injection induces paralysis of the mice rear limbs, followed by death. The sequence is that of Perivitellin-2 67 kDa subunit from Pomacea canaliculata (Golden apple snail).